A 543-amino-acid chain; its full sequence is Intermediate filament protein ifb-2 (543 aa).

Residues 1–10 (MSAVSYSMHR) are compositionally biased toward polar residues. The interval 1-27 (MSAVSYSMHRTTTTTSSSSHGGVSAGH) is disordered. A head region spans residues 1–42 (MSAVSYSMHRTTTTTSSSSHGGVSAGHAAEEFVASAEREKQE). The IF rod domain occupies 39-388 (EKQEMQQLNS…KLVESEEGRF (350 aa)). The coil 1A stretch occupies residues 43-74 (MQQLNSRLEVYISRVRQLEDRNKELVIELDTL). A linker 1 region spans residues 75–88 (RGSLGNDIGQIKFK). Residues 89–223 (FNDSLVKVRR…RIHSQEITEL (135 aa)) form a coil 1B region. The linker 12 stretch occupies residues 224 to 240 (RTLLAQAPADTREFFKN). The tract at residues 241-387 (ELALAIREIK…RKLVESEEGR (147 aa)) is coil 2. The tract at residues 388-542 (FTHVGQGVVV…SHIQTTVASS (155 aa)) is tail. Positions 420-538 (TRSSFKRHAK…IEKASHIQTT (119 aa)) constitute an LTD domain.

Belongs to the intermediate filament family. Expression is restricted to a discrete circumferential subapical layer within the intestinal terminal web (known as the 'endotube'); this layer joins directly to the apical junction complexes that connect adjacent gut cells.

The protein localises to the cytoplasm. In terms of biological role, cytoplasmic intermediate filaments provide mechanical strength to cells. Not essential protein. Component of the terminal web (organelle-depleted, intermediate filament-rich layer of cytoplasm that underlies the apical microvilli of polarized epithelial cells) in embryonic through to adult gut cells. Correct localization of filaments requires let-413. The protein is Intermediate filament protein ifb-2 (ifb-2) of Caenorhabditis elegans.